A 453-amino-acid polypeptide reads, in one-letter code: UDP-N-acetylmuramoylalanine--D-glutamate ligase (453 aa).

Gly120–Thr126 is a binding site for ATP.

The protein belongs to the MurCDEF family.

It is found in the cytoplasm. The catalysed reaction is UDP-N-acetyl-alpha-D-muramoyl-L-alanine + D-glutamate + ATP = UDP-N-acetyl-alpha-D-muramoyl-L-alanyl-D-glutamate + ADP + phosphate + H(+). It participates in cell wall biogenesis; peptidoglycan biosynthesis. Its function is as follows. Cell wall formation. Catalyzes the addition of glutamate to the nucleotide precursor UDP-N-acetylmuramoyl-L-alanine (UMA). The polypeptide is UDP-N-acetylmuramoylalanine--D-glutamate ligase (Nitrosococcus oceani (strain ATCC 19707 / BCRC 17464 / JCM 30415 / NCIMB 11848 / C-107)).